Consider the following 283-residue polypeptide: Small ribosomal subunit protein uS3 (283 aa).

The KH type-2 domain maps to Val-39–Arg-107. The interval Pro-209–Glu-283 is disordered. A compositionally biased stretch (basic and acidic residues) spans Leu-217–Pro-235. A compositionally biased stretch (low complexity) spans Pro-244–Ala-260.

The protein belongs to the universal ribosomal protein uS3 family. Part of the 30S ribosomal subunit. Forms a tight complex with proteins S10 and S14.

In terms of biological role, binds the lower part of the 30S subunit head. Binds mRNA in the 70S ribosome, positioning it for translation. The polypeptide is Small ribosomal subunit protein uS3 (Herminiimonas arsenicoxydans).